The primary structure comprises 926 residues: MKVSWPGENHWQVGPAVVESPAVGAPQVGGLPDVVPEGTLLNMVLKRMHRPRCCSYQLVFEHRRPSCIQGLRWTPLTNSEGSLDFRVSLEQATTEHVHKAGKLLYRHLLATYPTLIRDRKYHLRLHRQCCSGRELVDGILALGLGVHSRSQAVGICQVLLDEGALCHVKHDWTFQDRDAQFYRFPGPEPQPAGTHDVEEELVEAMALLSQRGPDALLTVALRKSPGQRTDEELDLIFEELVHIKAVAHLSNSVKRELAAVLLFEPHSKAGTVLFSQGDKGTSWYIIWKGSVNVVTRGKGLVTTLHEGDDFGQLALVNDAPRAATIILRENNCHFLRVDKQDFNRIIKDVEAKTMRLEEHGKVVLVLERTSQGAGPSRPPTPGRNRYTVMSGTPEKILELLLEAMRPDSSAHDPTETFLSDFLLTHSVFMPCTQLFAALLHHFHVEPSEPAGGSEQERSTYICNKRQQILRLVSRWVALYSPMLRSDPVATSFLQKLSDLVSRDTRLSNLLREQYPERRRHHRLENGCGNVSPQTKARNAPVWFPNHEEPLPSSAGAIRVGDKVPYDICRPDHSVLTLHLPVTASVREVMAALAHEDHWTKGQVLVKVNSAGDVVGLQPDARGVATSLGLNERIFVVDPQEVHELTPHPEQLGPTLGSSEMLDLVSAKDLAGQLTEHDWNLFNRIHQVELIHYVLGPQHLRDVTTANLERFMRRFNELQYWVATELCLCPVPGPRAQLLRKFIKLAAHLKEQKNLNSFFAVMFGLSNSAISRLAHTWERLPHKVRKLYSALERLLDPSWNHRVYRLALTKLSPPVIPFMPLLLKDMTFIHEGNHTLVENLINFEKMRMMARAVRMLHHCRSHSTAPLSPLRSRVSHIHEDSQASRISTCSEQSLSTRSPASTWAYVQQLKVIDNQRELSRLSRELEP.

Serine 79 is subject to Phosphoserine. One can recognise a DEP domain in the interval 110-186; sequence ATYPTLIRDR…RDAQFYRFPG (77 aa). The interval 218–242 is interaction with PDE3B; that stretch reads TVALRKSPGQRTDEELDLIFEELVH. 3',5'-cyclic AMP is bound by residues 311–314 and 321–322; these read GQLA and RA. Positions 369–388 are disordered; sequence TSQGAGPSRPPTPGRNRYTV. One can recognise an N-terminal Ras-GEF domain in the interval 384-521; the sequence is NRYTVMSGTP…EQYPERRRHH (138 aa). The segment at 398 to 422 is interaction with PDE3B; sequence ELLLEAMRPDSSAHDPTETFLSDFL. Phosphoserine occurs at positions 531 and 867. The 228-residue stretch at 665-892 folds into the Ras-GEF domain; sequence SAKDLAGQLT…SRISTCSEQS (228 aa).

Interacts with PDE3B and PIK3R6; form a signaling complex that regulates phosphatidylinositol 3-kinase gamma in angiogenesis. In terms of tissue distribution, expressed at low levels in adult brain. Strongly expressed in parts of the neonatal brain, including the septum and the thalamus.

The protein localises to the cytoplasm. It is found in the membrane. Functionally, guanine nucleotide exchange factor (GEF) for RAP1A and RAP2A small GTPases that is activated by binding cAMP. Through simultaneous binding of PDE3B to RAPGEF3 and PIK3R6 is assembled in a signaling complex in which it activates the PI3K gamma complex and which is involved in angiogenesis. Plays a role in the modulation of the cAMP-induced dynamic control of endothelial barrier function through a pathway that is independent on Rho-mediated signaling. Required for the actin rearrangement at cell-cell junctions, such as stress fibers and junctional actin. This is Rap guanine nucleotide exchange factor 3 (Rapgef3) from Rattus norvegicus (Rat).